Consider the following 466-residue polypeptide: MSVVPVADVLQGRVAVDSEVTVRGWVRTRRDSKAGISFLAVYDGSCFDPVQAVINNSLPNYNEDVLRLTTGCSVIVTGKVVASPGQGQQFEIQASKVEVAGWVEDPDTYPMAAKRHSIEYLREVAHLRPRTNLIGAVARVRHTLAQALHRFFNEQGFFWVSTPLITASDTEGAGEMFRVSTLDLENLPRNDQGKVDFDKDFFGKESFLTVSGQLNGETYACALSKIYTFGPTFRAENSNTSRHLAEFWMLEPEVAFANLNDIAGLAEAMLKYVFKAVLEERADDMKFFAERVDKDAVSRLERFIEADFAQVDYTDAVTILENCGRKFENPVYWGVDLSSEHERYLAEEHFKAPVVVKNYPKDIKAFYMRLNEDGKTVAAMDVLAPGIGEIIGGSQREERLDVLDERMLEMGLNKEDYWWYRDLRRYGTVPHSGFGLGFERLIAYVTGVQNVRDVIPFPRTPRNASF.

It belongs to the class-II aminoacyl-tRNA synthetase family. In terms of assembly, homodimer.

It localises to the cytoplasm. It catalyses the reaction tRNA(Asn) + L-asparagine + ATP = L-asparaginyl-tRNA(Asn) + AMP + diphosphate + H(+). The sequence is that of Asparagine--tRNA ligase from Escherichia coli O139:H28 (strain E24377A / ETEC).